Reading from the N-terminus, the 525-residue chain is Pre-mRNA-processing factor 19 homolog 2 (525 aa).

Positions 1–70 constitute a U-box domain; the sequence is MNCAISGEVP…PKTLHTASIP (70 aa). WD repeat units lie at residues 220–261, 262–301, 307–346, 351–390, 393–431, 433–469, and 478–517; these read TNKP…STLT, GHSK…NYAC, DHSA…CLAQ, SKNV…NVAK, GHTG…NFKS, LSAD…AEWN, and SGTG…KANV. The DWD box signature appears at 409–424; the sequence is FLATAAEDGVRLWDLR.

This sequence belongs to the WD repeat PRP19 family. In terms of assembly, homotetramer. Component of the multiprotein assembly MOS4-associated complex (MAC) at least composed of MOS4, CDC5, PRL1 and PRP19 which is related to the PRP19C/Prp19 complex/NTC/Nineteen complex identified in other organisms. Associated with the spliceosome.

Its subcellular location is the nucleus. The catalysed reaction is S-ubiquitinyl-[E2 ubiquitin-conjugating enzyme]-L-cysteine + [acceptor protein]-L-lysine = [E2 ubiquitin-conjugating enzyme]-L-cysteine + N(6)-ubiquitinyl-[acceptor protein]-L-lysine.. It participates in protein modification; protein ubiquitination. In terms of biological role, probable ubiquitin-protein ligase which is mainly involved pre-mRNA splicing and DNA repair. Component of the MAC complex that probably regulates defense responses through transcriptional control and thereby is essential for plant innate immunity. The chain is Pre-mRNA-processing factor 19 homolog 2 (PRP19B) from Arabidopsis thaliana (Mouse-ear cress).